Consider the following 188-residue polypeptide: Acireductone dioxygenase (188 aa).

Residues 1–20 (MSRLRIFADSNPTTPHFDSR) form a disordered region. Residues histidine 97, histidine 99, glutamate 103, and histidine 141 each contribute to the Fe(2+) site. 4 residues coordinate Ni(2+): histidine 97, histidine 99, glutamate 103, and histidine 141.

Belongs to the acireductone dioxygenase (ARD) family. In terms of assembly, monomer. Fe(2+) serves as cofactor. Requires Ni(2+) as cofactor.

It catalyses the reaction 1,2-dihydroxy-5-(methylsulfanyl)pent-1-en-3-one + O2 = 3-(methylsulfanyl)propanoate + CO + formate + 2 H(+). It carries out the reaction 1,2-dihydroxy-5-(methylsulfanyl)pent-1-en-3-one + O2 = 4-methylsulfanyl-2-oxobutanoate + formate + 2 H(+). It functions in the pathway amino-acid biosynthesis; L-methionine biosynthesis via salvage pathway; L-methionine from S-methyl-5-thio-alpha-D-ribose 1-phosphate: step 5/6. In terms of biological role, catalyzes 2 different reactions between oxygen and the acireductone 1,2-dihydroxy-3-keto-5-methylthiopentene (DHK-MTPene) depending upon the metal bound in the active site. Fe-containing acireductone dioxygenase (Fe-ARD) produces formate and 2-keto-4-methylthiobutyrate (KMTB), the alpha-ketoacid precursor of methionine in the methionine recycle pathway. Ni-containing acireductone dioxygenase (Ni-ARD) produces methylthiopropionate, carbon monoxide and formate, and does not lie on the methionine recycle pathway. This Xanthomonas campestris pv. campestris (strain 8004) protein is Acireductone dioxygenase.